The sequence spans 249 residues: Phosphoribosylaminoimidazole-succinocarboxamide synthase (249 aa).

Belongs to the SAICAR synthetase family.

It carries out the reaction 5-amino-1-(5-phospho-D-ribosyl)imidazole-4-carboxylate + L-aspartate + ATP = (2S)-2-[5-amino-1-(5-phospho-beta-D-ribosyl)imidazole-4-carboxamido]succinate + ADP + phosphate + 2 H(+). The protein operates within purine metabolism; IMP biosynthesis via de novo pathway; 5-amino-1-(5-phospho-D-ribosyl)imidazole-4-carboxamide from 5-amino-1-(5-phospho-D-ribosyl)imidazole-4-carboxylate: step 1/2. The polypeptide is Phosphoribosylaminoimidazole-succinocarboxamide synthase (Roseiflexus sp. (strain RS-1)).